The following is a 1109-amino-acid chain: Ankyrin repeat- and BTB/POZ domain-containing protein 3 (1109 aa).

Residues 168–188 (IVLSWGLAAHCTAAALAALSL) form a helical membrane-spanning segment. Positions 260–302 (SCSGPGPGSSSGSGPGPGSGPGAPAADKERETPGGGAASGGPC) are disordered. Residues 264–280 (PGPGSSSGSGPGPGSGP) are compositionally biased toward gly residues. 5 ANK repeats span residues 608 to 637 (QGMT…DLNV), 654 to 683 (RHWT…KVEG), 692 to 721 (YSET…DPLI), 735 to 764 (GDMN…KEKS), and 830 to 859 (TWLE…TIQE). The BTB domain maps to 928–994 (SDVTFLVEGR…LYYGGPESLL (67 aa)).

The protein localises to the membrane. The polypeptide is Ankyrin repeat- and BTB/POZ domain-containing protein 3 (Abtb3) (Mus musculus (Mouse)).